Consider the following 92-residue polypeptide: Large ribosomal subunit protein bL25 (92 aa).

This sequence belongs to the bacterial ribosomal protein bL25 family. As to quaternary structure, part of the 50S ribosomal subunit; part of the 5S rRNA/L5/L18/L25 subcomplex. Contacts the 5S rRNA. Binds to the 5S rRNA independently of L5 and L18.

Its function is as follows. This is one of the proteins that binds to the 5S RNA in the ribosome where it forms part of the central protuberance. In Vibrio parahaemolyticus serotype O3:K6 (strain RIMD 2210633), this protein is Large ribosomal subunit protein bL25.